Consider the following 51-residue polypeptide: Cytochrome b559 subunit beta (51 aa).

Residues 26 to 42 (WLAVHALTVPTIFFLGA) traverse the membrane as a helical segment. Histidine 30 contributes to the heme binding site.

The protein belongs to the PsbE/PsbF family. In terms of assembly, heterodimer of an alpha subunit and a beta subunit. PSII is composed of 1 copy each of membrane proteins PsbA, PsbB, PsbC, PsbD, PsbE, PsbF, PsbH, PsbI, PsbJ, PsbK, PsbL, PsbM, PsbT, PsbX, Psb30/Ycf12, peripheral proteins PsbO, CyanoQ (PsbQ), PsbU, PsbV and a large number of cofactors. It forms dimeric complexes. It depends on heme b as a cofactor.

Its subcellular location is the cell inner membrane. Its function is as follows. This b-type cytochrome is tightly associated with the reaction center of photosystem II (PSII). PSII is a light-driven water:plastoquinone oxidoreductase that uses light energy to abstract electrons from H(2)O, generating O(2) and a proton gradient subsequently used for ATP formation. It consists of a core antenna complex that captures photons, and an electron transfer chain that converts photonic excitation into a charge separation. This Gloeobacter violaceus (strain ATCC 29082 / PCC 7421) protein is Cytochrome b559 subunit beta.